The sequence spans 209 residues: Peptide deformylase 2 (209 aa).

Residues cysteine 101 and histidine 149 each coordinate Fe cation. Glutamate 150 is an active-site residue. Histidine 153 is a binding site for Fe cation.

The protein belongs to the polypeptide deformylase family. Fe(2+) is required as a cofactor.

It catalyses the reaction N-terminal N-formyl-L-methionyl-[peptide] + H2O = N-terminal L-methionyl-[peptide] + formate. Its function is as follows. Removes the formyl group from the N-terminal Met of newly synthesized proteins. Requires at least a dipeptide for an efficient rate of reaction. N-terminal L-methionine is a prerequisite for activity but the enzyme has broad specificity at other positions. The sequence is that of Peptide deformylase 2 from Coxiella burnetii (strain RSA 493 / Nine Mile phase I).